We begin with the raw amino-acid sequence, 492 residues long: Protein nucleotidyltransferase YdiU (492 aa).

ATP-binding residues include G88, G90, R91, K111, D123, G124, R174, and R181. D250 (proton acceptor) is an active-site residue. Residues N251 and D260 each contribute to the Mg(2+) site. D260 provides a ligand contact to ATP.

This sequence belongs to the SELO family. It depends on Mg(2+) as a cofactor. Requires Mn(2+) as cofactor.

It carries out the reaction L-seryl-[protein] + ATP = 3-O-(5'-adenylyl)-L-seryl-[protein] + diphosphate. The enzyme catalyses L-threonyl-[protein] + ATP = 3-O-(5'-adenylyl)-L-threonyl-[protein] + diphosphate. The catalysed reaction is L-tyrosyl-[protein] + ATP = O-(5'-adenylyl)-L-tyrosyl-[protein] + diphosphate. It catalyses the reaction L-histidyl-[protein] + UTP = N(tele)-(5'-uridylyl)-L-histidyl-[protein] + diphosphate. It carries out the reaction L-seryl-[protein] + UTP = O-(5'-uridylyl)-L-seryl-[protein] + diphosphate. The enzyme catalyses L-tyrosyl-[protein] + UTP = O-(5'-uridylyl)-L-tyrosyl-[protein] + diphosphate. Functionally, nucleotidyltransferase involved in the post-translational modification of proteins. It can catalyze the addition of adenosine monophosphate (AMP) or uridine monophosphate (UMP) to a protein, resulting in modifications known as AMPylation and UMPylation. In Rhodopseudomonas palustris (strain ATCC BAA-98 / CGA009), this protein is Protein nucleotidyltransferase YdiU.